Reading from the N-terminus, the 502-residue chain is MIDISQKEVWFVVGSQELYGEETLRKVAEHSQIIAKGLDASSSIPVKVVYKDVVKSPSQILDVCLAANSAKNCIGIIAWMHTFSPAKMWIGGLNILKKPLCHLHTQYNAEIPWGSIDMDFMNLNQSAHGDREFGFIMSRLRKKRKVVVGHWEDQRVQKQLGIWSRVVLGWDELQNLKVARIGDNMREVAVTEGDKVEAQIRFGMSVNGYDSSDVTKHIEKVTDKQLADLLAVYESSYNLTDSLKEGGAQRSSLVEAAKIELGLRAFLEEGGFGAFTDTFENLGVWKQLPGIATQRLMADGYGFGGEGDWKTAAMVRALKVMCIGLEGGTSFMEDYTYNFTPQKSYVLGSHMLEICPSIADGKPSCEVHPLGIGGKEDPARLVFNSPAGDAINVSLVDMGTRFRLIVNEVEAVKPMAELPKLPVARVLWDCKPNLEVAATAWILAGGAHHTVYSQSITTEYMEDFADIAGIELLVIDEKTTVREFKDKINANEAYFHLFQHGL.

Residues E306, E333, H350, and H449 each coordinate Mn(2+).

It belongs to the arabinose isomerase family. The cofactor is Mn(2+).

The catalysed reaction is beta-L-arabinopyranose = L-ribulose. The protein operates within carbohydrate degradation; L-arabinose degradation via L-ribulose; D-xylulose 5-phosphate from L-arabinose (bacterial route): step 1/3. Functionally, catalyzes the conversion of L-arabinose to L-ribulose. This Flavobacterium johnsoniae (strain ATCC 17061 / DSM 2064 / JCM 8514 / BCRC 14874 / CCUG 350202 / NBRC 14942 / NCIMB 11054 / UW101) (Cytophaga johnsonae) protein is L-arabinose isomerase.